Here is a 507-residue protein sequence, read N- to C-terminus: Maturase K (507 aa).

The protein belongs to the intron maturase 2 family. MatK subfamily.

It is found in the plastid. It localises to the chloroplast. Its function is as follows. Usually encoded in the trnK tRNA gene intron. Probably assists in splicing its own and other chloroplast group II introns. The polypeptide is Maturase K (Cupaniopsis anacardioides (Carrotwood)).